Here is an 80-residue protein sequence, read N- to C-terminus: MSLRKQTPSDFLKQIIGRPVVVKLNSGVDYRGVLACLDGYMNIALEQTEEYVNGQLKNKYGDAFIRGNNVLYISTQKRRM.

The region spanning 7–79 (TPSDFLKQII…VLYISTQKRR (73 aa)) is the Sm domain. Lys-59 carries the post-translational modification N6-acetyllysine.

Belongs to the snRNP Sm proteins family. SmF/LSm6 subfamily. As to quaternary structure, component of the precatalytic spliceosome (spliceosome B complex). Component of the U4/U6-U5 tri-snRNP complex, a building block of the precatalytic spliceosome (spliceosome B complex). The U4/U6-U5 tri-snRNP complex is composed of the U4, U6 and U5 snRNAs and at least PRPF3, PRPF4, PRPF6, PRPF8, PRPF31, SNRNP200, TXNL4A, SNRNP40, SNRPB, SNRPD1, SNRPD2, SNRPD3, SNRPE, SNRPF, SNRPG, DDX23, CD2BP2, PPIH, SNU13, EFTUD2, SART1 and USP39, plus LSM2, LSM3, LSM4, LSM5, LSM6, LSM7 and LSM8. LSM2, LSM3, LSM4, LSM5, LSM6, LSM7 and LSM8 form a heptameric, ring-shaped subcomplex (the LSM2-8 complex) that is part of the U4/U6-U5 tri-snRNP complex and the precatalytic spliceosome. Component of the heptameric LSM1-LSM7 complex, which consists of LSM1, LSM2, LSM3, LSM4, LSM5, LSM6 and LSM7.

It is found in the cytoplasm. The protein localises to the nucleus. In terms of biological role, plays a role in pre-mRNA splicing as component of the U4/U6-U5 tri-snRNP complex that is involved in spliceosome assembly, and as component of the precatalytic spliceosome (spliceosome B complex). The heptameric LSM2-8 complex binds specifically to the 3'-terminal U-tract of U6 snRNA. Component of LSm protein complexes, which are involved in RNA processing and may function in a chaperone-like manner, facilitating the efficient association of RNA processing factors with their substrates. Component of the cytoplasmic LSM1-LSM7 complex, which is thought to be involved in mRNA degradation by activating the decapping step in the 5'-to-3' mRNA decay pathway. The polypeptide is U6 snRNA-associated Sm-like protein LSm6 (LSM6) (Homo sapiens (Human)).